Consider the following 444-residue polypeptide: Probable D-serine dehydratase (444 aa).

K118 bears the N6-(pyridoxal phosphate)lysine mark.

Belongs to the serine/threonine dehydratase family. DsdA subfamily. It depends on pyridoxal 5'-phosphate as a cofactor.

It carries out the reaction D-serine = pyruvate + NH4(+). This chain is Probable D-serine dehydratase, found in Desulfitobacterium hafniense (strain Y51).